The chain runs to 252 residues: Triosephosphate isomerase (252 aa).

Position 10 to 12 (10 to 12 (NWK)) interacts with substrate. The Electrophile role is filled by H96. E168 serves as the catalytic Proton acceptor. Residues G174, S213, and 234–235 (GG) contribute to the substrate site.

It belongs to the triosephosphate isomerase family. As to quaternary structure, homodimer.

Its subcellular location is the cytoplasm. The catalysed reaction is D-glyceraldehyde 3-phosphate = dihydroxyacetone phosphate. It functions in the pathway carbohydrate biosynthesis; gluconeogenesis. Its pathway is carbohydrate degradation; glycolysis; D-glyceraldehyde 3-phosphate from glycerone phosphate: step 1/1. In terms of biological role, involved in the gluconeogenesis. Catalyzes stereospecifically the conversion of dihydroxyacetone phosphate (DHAP) to D-glyceraldehyde-3-phosphate (G3P). This is Triosephosphate isomerase from Nitrosomonas eutropha (strain DSM 101675 / C91 / Nm57).